We begin with the raw amino-acid sequence, 1086 residues long: Isoleucine--tRNA ligase (1086 aa).

A 'HIGH' region motif is present at residues 53–63 (PFANGLPHYGH). The 'KMSKS' region signature appears at 624-628 (KLSKR). Lys-627 serves as a coordination point for ATP.

The protein belongs to the class-I aminoacyl-tRNA synthetase family. IleS type 2 subfamily. As to quaternary structure, monomer. Zn(2+) is required as a cofactor.

The protein resides in the cytoplasm. It carries out the reaction tRNA(Ile) + L-isoleucine + ATP = L-isoleucyl-tRNA(Ile) + AMP + diphosphate. Functionally, catalyzes the attachment of isoleucine to tRNA(Ile). As IleRS can inadvertently accommodate and process structurally similar amino acids such as valine, to avoid such errors it has two additional distinct tRNA(Ile)-dependent editing activities. One activity is designated as 'pretransfer' editing and involves the hydrolysis of activated Val-AMP. The other activity is designated 'posttransfer' editing and involves deacylation of mischarged Val-tRNA(Ile). The polypeptide is Isoleucine--tRNA ligase (Rickettsia typhi (strain ATCC VR-144 / Wilmington)).